A 250-amino-acid polypeptide reads, in one-letter code: Histone H1.2 (250 aa).

A compositionally biased stretch (polar residues) spans 1–11; the sequence is MSDSAVATSAS. Disordered regions lie at residues 1-53 and 101-250; these read MSDS…QMVD and KLIQ…ATKK. Over residues 27–42 the composition is skewed to low complexity; it reads KKAAATPKSKKSTAAP. One can recognise an H15 domain in the interval 44–118; it reads SHPPTQQMVD…GASGSFKLSR (75 aa). Residues 120 to 133 are compositionally biased toward basic and acidic residues; the sequence is AKKDPKPKASAVEK. A compositionally biased stretch (low complexity) spans 151–161; that stretch reads STSTTKKAAGA. The span at 174 to 191 shows a compositional bias: basic and acidic residues; sequence KSVEKKRADKAKAKDAKK. The span at 192 to 211 shows a compositional bias: low complexity; sequence TGTIKAKPTTAKAKSSATKP. Basic residues-rich tracts occupy residues 212–225 and 235–250; these read KTPK…KPKK and TAVK…ATKK.

This sequence belongs to the histone H1/H5 family.

It is found in the nucleus. Its subcellular location is the chromosome. In terms of biological role, histones H1 are necessary for the condensation of nucleosome chains into higher-order structures. This Drosophila virilis (Fruit fly) protein is Histone H1.2 (His1.2).